Here is a 269-residue protein sequence, read N- to C-terminus: Tryptophan synthase alpha chain (269 aa).

Catalysis depends on proton acceptor residues Glu-49 and Asp-60.

This sequence belongs to the TrpA family. Tetramer of two alpha and two beta chains.

The enzyme catalyses (1S,2R)-1-C-(indol-3-yl)glycerol 3-phosphate + L-serine = D-glyceraldehyde 3-phosphate + L-tryptophan + H2O. It participates in amino-acid biosynthesis; L-tryptophan biosynthesis; L-tryptophan from chorismate: step 5/5. Its function is as follows. The alpha subunit is responsible for the aldol cleavage of indoleglycerol phosphate to indole and glyceraldehyde 3-phosphate. In Buchnera aphidicola subsp. Acyrthosiphon pisum (strain APS) (Acyrthosiphon pisum symbiotic bacterium), this protein is Tryptophan synthase alpha chain.